A 440-amino-acid polypeptide reads, in one-letter code: Tripartite motif-containing protein 14 (440 aa).

A B box-type zinc finger spans residues alanine 17–alanine 59. Residues cysteine 22, histidine 25, cysteine 45, and histidine 51 each contribute to the Zn(2+) site. The B30.2/SPRY domain occupies alanine 247–proline 440.

This sequence belongs to the TRIM/RBCC family. As to quaternary structure, interacts with MAVS. Interacts with WRNIP1 and PPP6C; these interactions positively regulate the RIG-I signaling pathway. Interacts with CGAS; this interaction stabilizes CGAS and promotes type I interferon production. Interacts with USP14; this interaction mediates the cleavage of 'Lys-48'-linked ubiquitination of CGAS. Interacts with TBK1. Interacts with SPI1. Interacts with KDM4D and USP14. Post-translationally, ubiquitinated. Undergoes 'Lys-63'-linked polyubiquitination; this modification allows IKBKG/NEMO recruitment to MAVS. Undergoes 'Lys-48'-linked polyubiquitination by RNF125; this modification mediates its degradation via the ubiquitin-proteasome pathway. In terms of tissue distribution, expressed with high level in spleen, thymus, liver and testis. Expressed with low level in the brain, kidney, and skeletal muscle. Expressed in various differentiation stages of B-lymphocytes.

Its subcellular location is the mitochondrion outer membrane. The protein resides in the cytoplasmic vesicle. The protein localises to the phagosome. Functionally, plays a role in the innate immune defense against viruses. Facilitates the type I IFN response by interacting with MAVS at the outer mitochondria membrane and thereby recruiting NF-kappa-B essential modulator IKBKG/NEMO to the MAVS signalosome, leading to the activation of both the IFN regulatory factor 3/IRF3 and NF-kappa-B pathways. Positively regulates the CGAS-induced type I interferon signaling pathway by stabilizing CGAS and inhibiting its autophagic degradation. Inhibits the transcriptional activity of SPI1 in a dose-dependent manner. Also inhibits OPTN-mediated selective autophagic degradation of KDM4D and thereby negatively regulates H3K9me2 and H3K9me3. Mechanistically, recruits USP14 to remove the 'Lys-63'-linked ubiquitination of KDM4D, preventing its recognition by OPTN and subsequent degradation. In terms of biological role, plays an essential role in the innate immune defense against viruses and bacteria. Facilitates the type I IFN response by interacting with MAVS at the outer mitochondria membrane and thereby recruiting NF-kappa-B essential modulator IKBKG/NEMO to the MAVS signalosome, leading to the activation of both the IFN regulatory factor 3/IRF3 and NF-kappa-B pathways. Positively regulates the CGAS-induced type I interferon signaling pathway by stabilizing CGAS and inhibiting its autophagic degradation. Acts as a scaffold between TBK1 and STAT3 to promote phosphorylation of STAT3 and resolve interferon-stimulated gene (ISG) expression. Inhibits the transcriptional activity of SPI1 in a dose-dependent manner. In Mus musculus (Mouse), this protein is Tripartite motif-containing protein 14 (Trim14).